Reading from the N-terminus, the 287-residue chain is Leukocyte-associated immunoglobulin-like receptor 1 (287 aa).

A signal peptide spans 1-21 (MSPHPTALLGLVLCLAQTIHT). Residues 22–165 (QEEDLPRPSI…SQGLKAEHLY (144 aa)) lie on the Extracellular side of the membrane. Positions 29 to 117 (PSISAEPGTV…KWSEQSDYLE (89 aa)) constitute an Ig-like C2-type domain. An intrachain disulfide couples Cys49 to Cys101. Asn69 is a glycosylation site (N-linked (GlcNAc...) asparagine). A disordered region spans residues 121–155 (KESSGGPDSPDTEPGSSAGPTQRPSDNSHNEHAPA). Polar residues predominate over residues 134 to 145 (PGSSAGPTQRPS). The chain crosses the membrane as a helical span at residues 166–186 (ILIGVSVVFLFCLLLLVLFCL). The Cytoplasmic portion of the chain corresponds to 187-287 (HRQNQIKQGP…SITYAAVARH (101 aa)). The disordered stretch occupies residues 192–211 (IKQGPPRSKDEEQKPQQRPD). Residues 198 to 208 (RSKDEEQKPQQ) show a composition bias toward basic and acidic residues. Short sequence motifs (ITIM motif) lie at residues 249 to 254 (VTYAQL) and 279 to 284 (ITYAAV). 2 positions are modified to phosphotyrosine: Tyr251 and Tyr281.

Interacts with SH2 domains of tyrosine-protein phosphatases PTPN6 and PTPN11. The interaction with PTPN6 is constitutive. Interacts with the SH2 domain of CSK. Binds with high affinity to extracellular matrix collagens, the interaction is functionally important. Phosphorylation at Tyr-251 and Tyr-281 activates it. May be phosphorylated by LCK. In terms of processing, N-glycosylated. Expressed on the majority of peripheral mononuclear cells, including natural killer (NK) cells, T-cells, B-cells, monocytes, and dendritic cells. Highly expressed in naive T-cells and B-cells but no expression on germinal center B-cells. Abnormally low expression in naive B-cells from HIV-1 infected patients. Very low expression in NK cells from a patient with chronic active Epstein-Barr virus infection.

It is found in the cell membrane. In terms of biological role, functions as an inhibitory receptor that plays a constitutive negative regulatory role on cytolytic function of natural killer (NK) cells, B-cells and T-cells. Activation by Tyr phosphorylation results in recruitment and activation of the phosphatases PTPN6 and PTPN11. It also reduces the increase of intracellular calcium evoked by B-cell receptor ligation. May also play its inhibitory role independently of SH2-containing phosphatases. Modulates cytokine production in CD4+ T-cells, down-regulating IL2 and IFNG production while inducing secretion of transforming growth factor beta. Also down-regulates IgG and IgE production in B-cells as well as IL8, IL10 and TNF secretion. Inhibits proliferation and induces apoptosis in myeloid leukemia cell lines as well as prevents nuclear translocation of NF-kappa-B p65 subunit/RELA and phosphorylation of I-kappa-B alpha/CHUK in these cells. Inhibits the differentiation of peripheral blood precursors towards dendritic cells. The polypeptide is Leukocyte-associated immunoglobulin-like receptor 1 (LAIR1) (Homo sapiens (Human)).